The following is a 150-amino-acid chain: Pyruvoyl-dependent arginine decarboxylase (150 aa).

At S42 the chain carries Pyruvic acid (Ser).

Belongs to the PdaD family. Requires pyruvate as cofactor.

The catalysed reaction is L-arginine + H(+) = agmatine + CO2. The chain is Pyruvoyl-dependent arginine decarboxylase from Methanopyrus kandleri (strain AV19 / DSM 6324 / JCM 9639 / NBRC 100938).